Reading from the N-terminus, the 35-residue chain is U2-agatoxin-Aop1a (35 aa).

3 disulfides stabilise this stretch: C3-C19, C10-C24, and C18-C34. L35 carries the post-translational modification Leucine amide.

Belongs to the neurotoxin 01 (U2-agtx) family. As to expression, expressed by the venom gland.

The protein resides in the secreted. Its function is as follows. Insect-selective toxin causing rapid but reversible paralysis in crickets. Suppresses the excitatory postsynaptic potentials evoked in lobster neuromuscular synaptic preparations, possibly by blocking the presynaptic calcium channel (Cav). Induces instantaneous reversible paralysis when injected into crickets. The sequence is that of U2-agatoxin-Aop1a from Allagelena opulenta (Funnel weaving spider).